The chain runs to 366 residues: 3-dehydroquinate synthase (366 aa).

NAD(+) contacts are provided by residues 107-111, 131-132, lysine 144, and lysine 153; these read GVIGD and TS. Residues glutamate 186, histidine 251, and histidine 268 each contribute to the Zn(2+) site.

It belongs to the sugar phosphate cyclases superfamily. Dehydroquinate synthase family. Co(2+) is required as a cofactor. Requires Zn(2+) as cofactor. It depends on NAD(+) as a cofactor.

The protein resides in the cytoplasm. The enzyme catalyses 7-phospho-2-dehydro-3-deoxy-D-arabino-heptonate = 3-dehydroquinate + phosphate. The protein operates within metabolic intermediate biosynthesis; chorismate biosynthesis; chorismate from D-erythrose 4-phosphate and phosphoenolpyruvate: step 2/7. In terms of biological role, catalyzes the conversion of 3-deoxy-D-arabino-heptulosonate 7-phosphate (DAHP) to dehydroquinate (DHQ). This is 3-dehydroquinate synthase from Rippkaea orientalis (strain PCC 8801 / RF-1) (Cyanothece sp. (strain PCC 8801)).